A 62-amino-acid polypeptide reads, in one-letter code: Sperm protamine P1 (62 aa).

Residues 1–62 (MARYRHSRSR…RYSRRRRRRY (62 aa)) form a disordered region.

It belongs to the protamine P1 family. Testis.

It is found in the nucleus. The protein localises to the chromosome. Its function is as follows. Protamines substitute for histones in the chromatin of sperm during the haploid phase of spermatogenesis. They compact sperm DNA into a highly condensed, stable and inactive complex. This is Sperm protamine P1 (PRM1) from Thylogale stigmatica (Red-legged pademelon).